We begin with the raw amino-acid sequence, 142 residues long: Large ribosomal subunit protein uL13 (142 aa).

This sequence belongs to the universal ribosomal protein uL13 family. In terms of assembly, part of the 50S ribosomal subunit.

Functionally, this protein is one of the early assembly proteins of the 50S ribosomal subunit, although it is not seen to bind rRNA by itself. It is important during the early stages of 50S assembly. The protein is Large ribosomal subunit protein uL13 of Histophilus somni (strain 129Pt) (Haemophilus somnus).